The primary structure comprises 252 residues: Ribosomal RNA small subunit methyltransferase J (252 aa).

Residues 101-102 (RD), 117-118 (ER), 153-154 (SS), and aspartate 171 contribute to the S-adenosyl-L-methionine site.

The protein belongs to the methyltransferase superfamily. RsmJ family.

The protein resides in the cytoplasm. The enzyme catalyses guanosine(1516) in 16S rRNA + S-adenosyl-L-methionine = N(2)-methylguanosine(1516) in 16S rRNA + S-adenosyl-L-homocysteine + H(+). Specifically methylates the guanosine in position 1516 of 16S rRNA. This Salmonella typhi protein is Ribosomal RNA small subunit methyltransferase J.